A 241-amino-acid chain; its full sequence is Probable transcriptional regulatory protein PSHAb0060 (241 aa).

Belongs to the TACO1 family.

It localises to the cytoplasm. This chain is Probable transcriptional regulatory protein PSHAb0060, found in Pseudoalteromonas translucida (strain TAC 125).